The following is a 216-amino-acid chain: MAPGSWFSPLFITVITLGLQWPQEAATFPAMPLSNLFANAVLRAQHLHLLAAETYKEFERSYIPEDQRHTNKNSQAFCYSETIPAPTGKDDAQQKSDMELLRFSLVLIQSWLTPVQYLSKVFTNNLVFGTSDRVFEKLKDLEEGIQALMRELEDRSPRGPQLLKPTYDKFDIHLRNEDALLKNYGLLSCFKKDLHKVETYLKVMKCRRFGESNCTI.

A signal peptide spans Met-1–Ala-25. His-46 lines the Zn(2+) pocket. Cys-78 and Cys-189 are oxidised to a cystine. A Zn(2+)-binding site is contributed by Glu-198. A disulfide bridge connects residues Cys-206 and Cys-214.

Belongs to the somatotropin/prolactin family.

The protein resides in the secreted. Its function is as follows. Growth hormone plays an important role in growth control. This Anas platyrhynchos (Mallard) protein is Somatotropin (GH).